The following is a 430-amino-acid chain: Adenylosuccinate synthetase (430 aa).

Residues 12–18 (GDEGKGK) and 40–42 (GHT) contribute to the GTP site. Asp13 acts as the Proton acceptor in catalysis. 2 residues coordinate Mg(2+): Asp13 and Gly40. IMP contacts are provided by residues 13–16 (DEGK), 38–41 (NAGH), Thr128, Arg142, Gln223, Thr238, and Arg302. Residue His41 is the Proton donor of the active site. 298–304 (TTTGRPR) contributes to the substrate binding site. GTP-binding positions include Arg304, 330–332 (SID), and 413–415 (SVG).

This sequence belongs to the adenylosuccinate synthetase family. In terms of assembly, homodimer. Requires Mg(2+) as cofactor.

Its subcellular location is the cytoplasm. The enzyme catalyses IMP + L-aspartate + GTP = N(6)-(1,2-dicarboxyethyl)-AMP + GDP + phosphate + 2 H(+). Its pathway is purine metabolism; AMP biosynthesis via de novo pathway; AMP from IMP: step 1/2. In terms of biological role, plays an important role in the de novo pathway of purine nucleotide biosynthesis. Catalyzes the first committed step in the biosynthesis of AMP from IMP. In Lactococcus lactis subsp. cremoris (strain SK11), this protein is Adenylosuccinate synthetase.